Here is a 577-residue protein sequence, read N- to C-terminus: MSANQNPSVQEVLGEVLGPWSDNERLKRESHFLRGTIEQDLQDRITGGFTADNFQLIRFHGMYQQDDRDIRAERSKQKLEPLHNVMLRARMPGGIITPHQWLAIDKFATEHTLYGSIRLTTRQTFQFHGVLKPNIKLMHQTLNSIGIDSIATAGDVNRNVLCTSNPVESQLHLQAYEWAKKISEHLLPKTRAYAEIWLDGEKIEGPDEEPILGSNYLPRKFKTTVVIPPHNDVDVHANDLNFVAIGENGQLIGFNVLVGGGLAMTHGDTSTYPRRADDFGFIPLEKTLEVAAAVVSTQRDWGNRSNRKNAKTKYTLDRVGVEVFKAEVEKRAGITFAPSRAYEFTSRGDRIGWVEGIDGKHHLTLFIENGRILDFPGKPLKTGVAEIAKVHQGDFRMTANQNLIVAGVPADQKQQIEQLARSHGLIDDGVSEQRINSMACVAFPTCPLAMAEAERFLPSFVTEVEGILAKHALPKEENIILRVTGCPNGCGRAMLAEIGLVGKAPGRYNLHLGGNRNGTRIPKMYKENITDTQILQEIDELVGRWASERLDGEGFGDFTIRAGIIEEVIISKRDFYA.

Residues cysteine 440, cysteine 446, cysteine 486, and cysteine 490 each coordinate [4Fe-4S] cluster. Cysteine 490 lines the siroheme pocket.

The protein belongs to the nitrite and sulfite reductase 4Fe-4S domain family. Alpha(8)-beta(8). The alpha component is a flavoprotein, the beta component is a hemoprotein. Requires siroheme as cofactor. The cofactor is [4Fe-4S] cluster.

It carries out the reaction hydrogen sulfide + 3 NADP(+) + 3 H2O = sulfite + 3 NADPH + 4 H(+). Its pathway is sulfur metabolism; hydrogen sulfide biosynthesis; hydrogen sulfide from sulfite (NADPH route): step 1/1. In terms of biological role, component of the sulfite reductase complex that catalyzes the 6-electron reduction of sulfite to sulfide. This is one of several activities required for the biosynthesis of L-cysteine from sulfate. The chain is Sulfite reductase [NADPH] hemoprotein beta-component from Vibrio cholerae serotype O1 (strain ATCC 39541 / Classical Ogawa 395 / O395).